A 268-amino-acid polypeptide reads, in one-letter code: Taurine import ATP-binding protein TauB (268 aa).

Residues 4–236 (LSINNLSMRF…LGVDSDLREV (233 aa)) enclose the ABC transporter domain. 41 to 48 (GPSGCGKT) serves as a coordination point for ATP.

The protein belongs to the ABC transporter superfamily. Taurine importer (TC 3.A.1.17.1) family. As to quaternary structure, the complex is composed of two ATP-binding proteins (TauB), two transmembrane proteins (TauC) and a solute-binding protein (TauA).

The protein localises to the cell inner membrane. It carries out the reaction taurine(out) + ATP + H2O = taurine(in) + ADP + phosphate + H(+). Its function is as follows. Part of the ABC transporter complex TauABC involved in taurine import. Responsible for energy coupling to the transport system. The sequence is that of Taurine import ATP-binding protein TauB from Roseobacter denitrificans (strain ATCC 33942 / OCh 114) (Erythrobacter sp. (strain OCh 114)).